We begin with the raw amino-acid sequence, 354 residues long: Holliday junction branch migration complex subunit RuvB (354 aa).

The interval 1–22 (MTIQTDDFAPAPPRVVSAAPAS) is disordered. The segment at 5-193 (TDDFAPAPPR…FGIVARLEFY (189 aa)) is large ATPase domain (RuvB-L). ATP-binding positions include Leu32, Arg33, Gly74, Lys77, Thr78, Thr79, 140-142 (EDY), Arg183, Tyr193, and Arg230. Thr78 is a binding site for Mg(2+). A small ATPAse domain (RuvB-S) region spans residues 194–264 (TPEELALIVR…IAHKALVMLD (71 aa)). Residues 267–354 (PQGFDLMDRK…RSDGQDLFGI (88 aa)) form a head domain (RuvB-H) region. Residues Arg303, Arg322, and Arg327 each coordinate DNA.

The protein belongs to the RuvB family. Homohexamer. Forms an RuvA(8)-RuvB(12)-Holliday junction (HJ) complex. HJ DNA is sandwiched between 2 RuvA tetramers; dsDNA enters through RuvA and exits via RuvB. An RuvB hexamer assembles on each DNA strand where it exits the tetramer. Each RuvB hexamer is contacted by two RuvA subunits (via domain III) on 2 adjacent RuvB subunits; this complex drives branch migration. In the full resolvosome a probable DNA-RuvA(4)-RuvB(12)-RuvC(2) complex forms which resolves the HJ.

The protein localises to the cytoplasm. The catalysed reaction is ATP + H2O = ADP + phosphate + H(+). The RuvA-RuvB-RuvC complex processes Holliday junction (HJ) DNA during genetic recombination and DNA repair, while the RuvA-RuvB complex plays an important role in the rescue of blocked DNA replication forks via replication fork reversal (RFR). RuvA specifically binds to HJ cruciform DNA, conferring on it an open structure. The RuvB hexamer acts as an ATP-dependent pump, pulling dsDNA into and through the RuvAB complex. RuvB forms 2 homohexamers on either side of HJ DNA bound by 1 or 2 RuvA tetramers; 4 subunits per hexamer contact DNA at a time. Coordinated motions by a converter formed by DNA-disengaged RuvB subunits stimulates ATP hydrolysis and nucleotide exchange. Immobilization of the converter enables RuvB to convert the ATP-contained energy into a lever motion, pulling 2 nucleotides of DNA out of the RuvA tetramer per ATP hydrolyzed, thus driving DNA branch migration. The RuvB motors rotate together with the DNA substrate, which together with the progressing nucleotide cycle form the mechanistic basis for DNA recombination by continuous HJ branch migration. Branch migration allows RuvC to scan DNA until it finds its consensus sequence, where it cleaves and resolves cruciform DNA. The chain is Holliday junction branch migration complex subunit RuvB from Variovorax paradoxus (strain S110).